The primary structure comprises 145 residues: Natriuretic peptides A (145 aa).

A signal peptide spans 1-23 (MGTSFVGYLTFVLLLLALTKVRG). The propeptide occupies 24-117 (GPAYNSPLSS…KLRELLNAPR (94 aa)). Cys125 and Cys141 are oxidised to a cystine.

Belongs to the natriuretic peptide family. In terms of processing, cleaved upon secretion to produce the functional hormone.

The protein resides in the secreted. Its function is as follows. Hormone playing a key role in cardiovascular homeostasis through regulation of natriuresis, diuresis, and vasodilation. Has a cGMP-stimulating activity. In Aquarana catesbeiana (American bullfrog), this protein is Natriuretic peptides A.